The following is a 210-amino-acid chain: MRKRQQSQNEGTSAVSQAPGNQRPNNTCCFCWCCCCSCSCLTVRNEDRGDNAGRPTHTTKMESIQVIEECQNPTADEILSWAQNFDKMMKTPAGRNLFREFLRTEYSEENLLFWLACEDLKKEQNKKVIEEKARLIYEDYISILSPKEVSLDSRVREVINRNLLDPSPHMYEDAQLQIYTLMHRDSFPRFLNSQIYKSLVESITGSTSET.

The interval 1 to 21 (MRKRQQSQNEGTSAVSQAPGN) is disordered. Residues 84–200 (NFDKMMKTPA…LNSQIYKSLV (117 aa)) form the RGS domain.

As to quaternary structure, interacts with GNAI1 and GNAQ. Interacts with GNAZ and GNAI2. Forms a complex with mu-opioid receptors and G(alpha)z/i2 subunits, including GNAZ and GNAI2; the formation of this complex results in mu-opioid receptor desensitization. N- and O-glycosylated in synapsomal membranes. Post-translationally, serine phosphorylated in synapsomal membranes. In terms of processing, sumoylated with SUMO1 and SUM02 in synaptosomes. The sumoylated forms act as a scaffold for sequestering mu-opioid receptor-activated G(alpha) subunits.

The protein localises to the membrane. It is found in the synapse. It localises to the synaptosome. Its subcellular location is the nucleus. The protein resides in the cytoplasm. In terms of biological role, regulates G protein-coupled receptor signaling cascades, including signaling via muscarinic acetylcholine receptor CHRM2 and dopamine receptor DRD2. Inhibits signal transduction by increasing the GTPase activity of G protein alpha subunits, thereby driving them into their inactive GDP-bound form. Binds selectively to GNAZ and GNAI2 subunits, accelerates their GTPase activity and regulates their signaling activities. Negatively regulates mu-opioid receptor-mediated activation of the G-proteins. In Gallus gallus (Chicken), this protein is Regulator of G-protein signaling 17 (RGS17).